A 234-amino-acid chain; its full sequence is Fibrillarin-like rRNA/tRNA 2'-O-methyltransferase (234 aa).

S-adenosyl-L-methionine-binding positions include 90-91 (TT), 109-110 (EF), 134-135 (DA), and 154-157 (DIAQ).

It belongs to the methyltransferase superfamily. Fibrillarin family. Interacts with nop5. Component of box C/D small ribonucleoprotein (sRNP) particles that contain rpl7ae, FlpA and nop5, plus a guide RNA.

Functionally, involved in pre-rRNA and tRNA processing. Utilizes the methyl donor S-adenosyl-L-methionine to catalyze the site-specific 2'-hydroxyl methylation of ribose moieties in rRNA and tRNA. Site specificity is provided by a guide RNA that base pairs with the substrate. Methylation occurs at a characteristic distance from the sequence involved in base pairing with the guide RNA. This chain is Fibrillarin-like rRNA/tRNA 2'-O-methyltransferase, found in Staphylothermus marinus (strain ATCC 43588 / DSM 3639 / JCM 9404 / F1).